Reading from the N-terminus, the 554-residue chain is Membrane protein insertase YidC (554 aa).

5 helical membrane-spanning segments follow: residues 7 to 24 (VLWV…DNWQ), 362 to 382 (FVGN…AVFF), 436 to 456 (LPVV…LASV), 475 to 495 (PFFI…SLNP), and 510 to 530 (PIAF…YYVV).

It belongs to the OXA1/ALB3/YidC family. Type 1 subfamily. In terms of assembly, interacts with the Sec translocase complex via SecD. Specifically interacts with transmembrane segments of nascent integral membrane proteins during membrane integration.

It is found in the cell inner membrane. Required for the insertion and/or proper folding and/or complex formation of integral membrane proteins into the membrane. Involved in integration of membrane proteins that insert both dependently and independently of the Sec translocase complex, as well as at least some lipoproteins. Aids folding of multispanning membrane proteins. The polypeptide is Membrane protein insertase YidC (Burkholderia ambifaria (strain MC40-6)).